The following is a 413-amino-acid chain: MLSMPSFERKQNIFANKDALGESYQPNKIEERDDEIEKYMDALQPVIDGWEPNNIFVYGNTGVGKTAVTDHLLDQLQTDVEAYDDVTLSVIYLNCKTLSSSYQVAVELVNKLRRPGAEISSTGYPQQSVFKKLYQELEALGGTILIVLDEVDAIGDRDDLLYELPRARSQGNLEDAKVGIIGISNDYKFQEQLDPRVQDTLCERELQFPPYDALELANILDSRTDIAIADDSLAEGVTQHCAALAARDSGSARQALDLLRLAGELAENQDADAISTDHVEAARSELERERVEEGMRELTTHGRLTLLAVVSKAAKADTPSRTRAIYDEYASLCKSAANTDDPLKQRSVHNHLSDLHMLGILSKYENRSGSRGNYYSYELDVPFESAVDAMADVLMLDAEIEKMEGLASRNGVL.

Residues 63–67 (VGKTA), tyrosine 211, and arginine 223 contribute to the ATP site.

This sequence belongs to the CDC6/cdc18 family.

Its function is as follows. Involved in regulation of DNA replication. This chain is ORC1-type DNA replication protein 10 (orc10), found in Halobacterium salinarum (strain ATCC 700922 / JCM 11081 / NRC-1) (Halobacterium halobium).